A 98-amino-acid chain; its full sequence is Aspartyl/glutamyl-tRNA(Asn/Gln) amidotransferase subunit C (98 aa).

It belongs to the GatC family. Heterotrimer of A, B and C subunits.

The enzyme catalyses L-glutamyl-tRNA(Gln) + L-glutamine + ATP + H2O = L-glutaminyl-tRNA(Gln) + L-glutamate + ADP + phosphate + H(+). It catalyses the reaction L-aspartyl-tRNA(Asn) + L-glutamine + ATP + H2O = L-asparaginyl-tRNA(Asn) + L-glutamate + ADP + phosphate + 2 H(+). Functionally, allows the formation of correctly charged Asn-tRNA(Asn) or Gln-tRNA(Gln) through the transamidation of misacylated Asp-tRNA(Asn) or Glu-tRNA(Gln) in organisms which lack either or both of asparaginyl-tRNA or glutaminyl-tRNA synthetases. The reaction takes place in the presence of glutamine and ATP through an activated phospho-Asp-tRNA(Asn) or phospho-Glu-tRNA(Gln). The protein is Aspartyl/glutamyl-tRNA(Asn/Gln) amidotransferase subunit C of Kocuria rhizophila (strain ATCC 9341 / DSM 348 / NBRC 103217 / DC2201).